Here is a 167-residue protein sequence, read N- to C-terminus: Telethonin (167 aa).

A Phosphoserine modification is found at Ser39. The segment at 144–167 is disordered; the sequence is VPVSKPGALRRSLSRSMSQEAQRG. The span at 157–167 shows a compositional bias: polar residues; the sequence is SRSMSQEAQRG.

In terms of assembly, interacts with MYOZ1, MYOZ2 and MYOZ3. Interacts with CSRP3. Interacts directly with the N-terminal Ig-like domains of 2 titin (TTN) molecules. Interacts with ANKRD2; the interaction is direct. Heart and skeletal muscle.

The protein resides in the cytoplasm. It is found in the myofibril. Its subcellular location is the sarcomere. In terms of biological role, muscle assembly regulating factor. Mediates the antiparallel assembly of titin (TTN) molecules at the sarcomeric Z-disk. This Homo sapiens (Human) protein is Telethonin (TCAP).